A 1026-amino-acid chain; its full sequence is RecBCD enzyme subunit RecB (1026 aa).

The 438-residue stretch at 1 to 438 folds into the UvrD-like helicase ATP-binding domain; it reads MSSFDIFSPT…LILDTNYRST (438 aa). The tract at residues 1 to 766 is DNA-binding and helicase activity, interacts with RecC; the sequence is MSSFDIFSPT…LANYANVTKH (766 aa). 21 to 28 provides a ligand contact to ATP; it reads ASAGTGKT. Residues 815–1026 form a nuclease activity, interacts with RecD and RecA region; that stretch reads SRTIHSFSST…KGNGFLQPGR (212 aa). Mg(2+)-binding residues include His854, Asp940, and Asp953. The active-site For nuclease activity is Asp953.

The protein belongs to the helicase family. UvrD subfamily. Heterotrimer of RecB, RecC and RecD. All subunits contribute to DNA-binding. Interacts with RecA. Requires Mg(2+) as cofactor.

The enzyme catalyses Exonucleolytic cleavage (in the presence of ATP) in either 5'- to 3'- or 3'- to 5'-direction to yield 5'-phosphooligonucleotides.. It catalyses the reaction Couples ATP hydrolysis with the unwinding of duplex DNA by translocating in the 3'-5' direction.. It carries out the reaction ATP + H2O = ADP + phosphate + H(+). In terms of biological role, a helicase/nuclease that prepares dsDNA breaks (DSB) for recombinational DNA repair. Binds to DSBs and unwinds DNA via a highly rapid and processive ATP-dependent bidirectional helicase activity. Unwinds dsDNA until it encounters a Chi (crossover hotspot instigator) sequence from the 3' direction. Cuts ssDNA a few nucleotides 3' to the Chi site. The properties and activities of the enzyme are changed at Chi. The Chi-altered holoenzyme produces a long 3'-ssDNA overhang and facilitates RecA-binding to the ssDNA for homologous DNA recombination and repair. Holoenzyme degrades any linearized DNA that is unable to undergo homologous recombination. In the holoenzyme this subunit contributes ATPase, 3'-5' helicase, exonuclease activity and loads RecA onto ssDNA. The protein is RecBCD enzyme subunit RecB of Chlamydia trachomatis serovar D (strain ATCC VR-885 / DSM 19411 / UW-3/Cx).